An 80-amino-acid polypeptide reads, in one-letter code: Raniseptin-1 (80 aa).

A signal peptide spans 1–22 (MAFLKKSLFLVLFLGIVSLSIC). Positions 23–49 (EEEKREGEEEEKQEEENEELSEEELRE) are excised as a propeptide.

The protein belongs to the frog skin active peptide (FSAP) family. Dermaseptin subfamily. As to expression, expressed by the skin glands.

The protein localises to the secreted. In terms of biological role, has antibacterial activity against the Gram-negative bacteria E.coli ATCC 25922 (MIC=5 uM), P.aeruginosa ATCC 27853 (MIC=10 uM) and X.citri (MIC&lt; 2 uM), and the Gram-positive bacterium S.aureus ATCC 29313 (MIC=20 uM). Does not have hemolytic activity against human erythrocytes. The polypeptide is Raniseptin-1 (Boana raniceps (Chaco tree frog)).